The following is a 173-amino-acid chain: Alpha-crystallin A chain (173 aa).

An N-acetylmethionine modification is found at Met1. A required for complex formation with BFSP1 and BFSP2 region spans residues 1–63 (MDVTIQHPWF…RTVLDSGVSE (63 aa)). At Gln6 the chain carries Deamidated glutamine; partial. Ser45 is modified (phosphoserine). Deamidated glutamine; partial is present on Gln50. The sHSP domain occupies 52–162 (LFRTVLDSGV…GHSERAIPVS (111 aa)). Residue Lys70 is modified to N6-acetyllysine. Deamidated glutamine; partial is present on Gln90. Lys99 is modified (N6-acetyllysine). His100 is a binding site for Zn(2+). Position 101 is a deamidated asparagine; partial (Asn101). Glu102 and His107 together coordinate Zn(2+). The residue at position 122 (Ser122) is a Phosphoserine. At Asn123 the chain carries Deamidated asparagine; partial. The disordered stretch occupies residues 145-173 (KVQSGLDAGHSERAIPVSREEKPSSAPSS). Residue Gln147 is modified to Deamidated glutamine; partial. The segment covering 153 to 167 (GHSERAIPVSREEKP) has biased composition (basic and acidic residues). Zn(2+) is bound at residue His154. Ser162 is a glycosylation site (O-linked (GlcNAc) serine).

The protein belongs to the small heat shock protein (HSP20) family. In terms of assembly, heteromer composed of three CRYAA and one CRYAB subunits. Inter-subunit bridging via zinc ions enhances stability, which is crucial as there is no protein turn over in the lens. Can also form homodimers and homotetramers (dimers of dimers) which serve as the building blocks of homooligomers. Within homooligomers, the zinc-binding motif is created from residues of 3 different molecules. His-100 and Glu-102 from one molecule are ligands of the zinc ion, and His-107 and His-154 residues from additional molecules complete the site with tetrahedral coordination geometry. Part of a complex required for lens intermediate filament formation composed of BFSP1, BFSP2 and CRYAA. Post-translationally, acetylation at Lys-70 may increase chaperone activity. Undergoes age-dependent proteolytical cleavage at the C-terminus.

The protein localises to the cytoplasm. Its subcellular location is the nucleus. In terms of biological role, contributes to the transparency and refractive index of the lens. Acts as a chaperone, preventing aggregation of various proteins under a wide range of stress conditions. Required for the correct formation of lens intermediate filaments as part of a complex composed of BFSP1, BFSP2 and CRYAA. This chain is Alpha-crystallin A chain (CRYAA), found in Eulemur fulvus fulvus (Brown lemur).